The primary structure comprises 681 residues: DNA ligase (681 aa).

NAD(+) is bound by residues 45 to 49, 94 to 95, and glutamate 120; these read DFDFD and SL. Catalysis depends on lysine 122, which acts as the N6-AMP-lysine intermediate. NAD(+)-binding residues include arginine 143, glutamate 177, lysine 289, and lysine 313. The Zn(2+) site is built by cysteine 403, cysteine 406, cysteine 421, and cysteine 426. A BRCT domain is found at 593–681; sequence SDQQPFAGQS…SLKINFKNTI (89 aa).

It belongs to the NAD-dependent DNA ligase family. LigA subfamily. It depends on Mg(2+) as a cofactor. Mn(2+) is required as a cofactor.

It catalyses the reaction NAD(+) + (deoxyribonucleotide)n-3'-hydroxyl + 5'-phospho-(deoxyribonucleotide)m = (deoxyribonucleotide)n+m + AMP + beta-nicotinamide D-nucleotide.. Its function is as follows. DNA ligase that catalyzes the formation of phosphodiester linkages between 5'-phosphoryl and 3'-hydroxyl groups in double-stranded DNA using NAD as a coenzyme and as the energy source for the reaction. It is essential for DNA replication and repair of damaged DNA. The chain is DNA ligase from Leptospira borgpetersenii serovar Hardjo-bovis (strain L550).